The following is a 200-amino-acid chain: MTENAISDCLNVLDSTRTLCLRIHELKQHSRDADDQNPEQIKRQLMSKLLILREANRKSYEQLVQAKTITAEHKSELDNARIRLQALQYKKLHLKTIIKNYEEKEHIYTALPLVSKEEFLKEHPEFKSSNDHDLMLAILEDELKERQRLSTLKQELLKRKAALISENKAKRNALQKGDEKLQTFLRSSVPVQEYYNITSM.

The protein belongs to the THOC5 family. As to quaternary structure, component of the THO and TREX complexes.

The protein localises to the cytoplasm. It is found in the nucleus. Component the THO subcomplex of the TREX complex, which operates in coupling transcription elongation to mRNA export. The THO complex is recruited to transcribed genes and moves along the gene with the elongating polymerase during transcription. THO is important for stabilizing nascent RNA in the RNA polymerase II elongation complex by preventing formation of DNA:RNA hybrids behind the elongating polymerase. The THO complex is also required to maintain TRAMP complex occupancy at sites of snoRNA transcription thus promoting exosome-mediated degradation of snoRNA precursors. The sequence is that of THO complex subunit tho5 from Schizosaccharomyces pombe (strain 972 / ATCC 24843) (Fission yeast).